Here is a 361-residue protein sequence, read N- to C-terminus: 3-dehydroquinate synthase (361 aa).

NAD(+)-binding positions include 72–77 (SGEKEK), 130–131 (TT), Lys142, and Lys151. Zn(2+) contacts are provided by Glu184, His247, and His264.

It belongs to the sugar phosphate cyclases superfamily. Dehydroquinate synthase family. The cofactor is Co(2+). It depends on Zn(2+) as a cofactor. NAD(+) serves as cofactor.

The protein localises to the cytoplasm. It catalyses the reaction 7-phospho-2-dehydro-3-deoxy-D-arabino-heptonate = 3-dehydroquinate + phosphate. It functions in the pathway metabolic intermediate biosynthesis; chorismate biosynthesis; chorismate from D-erythrose 4-phosphate and phosphoenolpyruvate: step 2/7. Catalyzes the conversion of 3-deoxy-D-arabino-heptulosonate 7-phosphate (DAHP) to dehydroquinate (DHQ). This Bacillus cereus (strain ATCC 10987 / NRS 248) protein is 3-dehydroquinate synthase.